A 1083-amino-acid polypeptide reads, in one-letter code: Regulator of the glycerol channel 1 (1083 aa).

Disordered stretches follow at residues 1–46 (MSDY…GSSD) and 69–89 (LKNEPASGNTQMNGPDGKENK). Residues 13–31 (GGISKQPATPGSTRSSSRN) show a composition bias toward polar residues. Phosphoserine occurs at positions 136, 249, 252, 481, and 537. In terms of domain architecture, PH spans 495–606 (CIRVGYLLKK…DCSLKDSTDS (112 aa)). Residues 534–582 (DSKSPRSKNKPVVEQSDISRVNKDGTNAGSHPSSKGTQDPKLTKRRKGL) form a disordered region. Polar residues predominate over residues 549-570 (SDISRVNKDGTNAGSHPSSKGT). Residues Ser-652, Ser-765, and Ser-813 each carry the phosphoserine modification. Phosphothreonine is present on residues Thr-817 and Thr-857. 6 positions are modified to phosphoserine: Ser-866, Ser-879, Ser-918, Ser-966, Ser-969, and Ser-975. The interval 979–1083 (EENRTQNCSG…TVPATSASSK (105 aa)) is disordered. Composition is skewed to polar residues over residues 983–992 (TQNCSGSRKS), 1043–1061 (LKKTYSAENVPLTSTVSND), and 1071–1083 (STNTVPATSASSK). Ser-1059, Ser-1081, and Ser-1082 each carry phosphoserine.

It belongs to the RGC1 family.

The protein localises to the cytoplasm. Positive regulator of FPS1 glycerol channel required for the glycerol efflux. This is Regulator of the glycerol channel 1 (RGC1) from Saccharomyces cerevisiae (strain ATCC 204508 / S288c) (Baker's yeast).